Here is a 349-residue protein sequence, read N- to C-terminus: UDP-N-acetylenolpyruvoylglucosamine reductase (349 aa).

One can recognise an FAD-binding PCMH-type domain in the interval 26–197 (FDARARVAAR…VAVTFRLPKA (172 aa)). Arginine 173 is a catalytic residue. Serine 249 acts as the Proton donor in catalysis. Glutamate 345 is a catalytic residue.

The protein belongs to the MurB family. Requires FAD as cofactor.

The protein resides in the cytoplasm. The enzyme catalyses UDP-N-acetyl-alpha-D-muramate + NADP(+) = UDP-N-acetyl-3-O-(1-carboxyvinyl)-alpha-D-glucosamine + NADPH + H(+). Its pathway is cell wall biogenesis; peptidoglycan biosynthesis. In terms of biological role, cell wall formation. In Burkholderia pseudomallei (strain 1710b), this protein is UDP-N-acetylenolpyruvoylglucosamine reductase.